Reading from the N-terminus, the 412-residue chain is Major facilitator superfamily domain-containing protein 3 (412 aa).

12 consecutive transmembrane segments (helical) span residues Gly10 to Leu30, Val40 to Val60, Val68 to Pro88, Thr99 to Leu119, Gly152 to Ala172, Thr173 to Pro193, Tyr204 to Thr224, Leu252 to Leu272, Leu291 to Val311, Ala320 to Phe340, Phe361 to Ala381, and Leu384 to Leu404.

It belongs to the major facilitator superfamily. In terms of tissue distribution, in brain, expressed in the cortex, striatum, hippocampus, hypothalamus, thalamus and cerebellum (at protein level). Widely expressed with highest levels in kidney and liver.

Its subcellular location is the membrane. The sequence is that of Major facilitator superfamily domain-containing protein 3 (Mfsd3) from Mus musculus (Mouse).